Reading from the N-terminus, the 517-residue chain is 6-phosphogluconate dehydrogenase, decarboxylating (517 aa).

NADP(+) contacts are provided by residues 35-40 (GLAVMG), 58-60 (NRT), 100-102 (VKA), and N128. Substrate contacts are provided by residues N128 and 154-156 (SGG). Residue K208 is the Proton acceptor of the active site. Residue 211-212 (HN) participates in substrate binding. The active-site Proton donor is E215. Substrate-binding residues include Y216, K286, R313, R474, and H480.

The protein belongs to the 6-phosphogluconate dehydrogenase family. Homodimer.

The catalysed reaction is 6-phospho-D-gluconate + NADP(+) = D-ribulose 5-phosphate + CO2 + NADPH. Its pathway is carbohydrate degradation; pentose phosphate pathway; D-ribulose 5-phosphate from D-glucose 6-phosphate (oxidative stage): step 3/3. In terms of biological role, catalyzes the oxidative decarboxylation of 6-phosphogluconate to ribulose 5-phosphate and CO(2), with concomitant reduction of NADP to NADPH. This Candida albicans (Yeast) protein is 6-phosphogluconate dehydrogenase, decarboxylating (DOR14).